A 515-amino-acid polypeptide reads, in one-letter code: Meiotically up-regulated gene 68 protein (515 aa).

The tract at residues 165–204 (LHSIESERNESSLSLDSGESEKKSEEDNGNGEQNYIPEQY) is disordered.

Has a role in meiosis. This chain is Meiotically up-regulated gene 68 protein (mug68), found in Schizosaccharomyces pombe (strain 972 / ATCC 24843) (Fission yeast).